Reading from the N-terminus, the 195-residue chain is Peroxiredoxin bcp1 (195 aa).

Residues 46-168 enclose the Thioredoxin domain; that stretch reads IQVGDVIPDI…SHWIFEKGTG (123 aa). Catalysis depends on cysteine 89, which acts as the Cysteine sulfenic acid (-SOH) intermediate. A disulfide bridge links cysteine 89 with cysteine 94.

This sequence belongs to the peroxiredoxin family. BCP/PrxQ subfamily. As to quaternary structure, monomer. The active site is a conserved redox-active cysteine residue, the peroxidatic cysteine (C(P)), which makes the nucleophilic attack on the peroxide substrate. The peroxide oxidizes the C(P)-SH to cysteine sulfenic acid (C(P)-SOH), which then reacts with another cysteine residue, the resolving cysteine (C(R)), to form a disulfide bridge. The disulfide is subsequently reduced by an appropriate electron donor to complete the catalytic cycle. In this atypical 2-Cys peroxiredoxin, C(R) is present in the same subunit to form an intramolecular disulfide. The disulfide is subsequently reduced by thioredoxin.

It is found in the cytoplasm. The protein resides in the nucleus. It catalyses the reaction a hydroperoxide + [thioredoxin]-dithiol = an alcohol + [thioredoxin]-disulfide + H2O. Its function is as follows. Thiol-specific peroxidase that catalyzes the reduction of hydrogen peroxide and organic hydroperoxides to water and alcohols, respectively. Plays a role in cell protection against oxidative stress by detoxifying peroxides and as sensor of hydrogen peroxide-mediated signaling events. Acts as a scavenger of H(2)O(2). The sequence is that of Peroxiredoxin bcp1 (bcp1) from Schizosaccharomyces pombe (strain 972 / ATCC 24843) (Fission yeast).